The primary structure comprises 384 residues: Autophagy-related protein 25 (384 aa).

2 coiled-coil regions span residues 132–236 and 342–379; these read KETA…RRAS and KKNN…QWKT. The disordered stretch occupies residues 224-247; the sequence is ESRLSNMNKRRASPRDDAEAEPKR. Over residues 236 to 247 the composition is skewed to basic and acidic residues; sequence SPRDDAEAEPKR.

It belongs to the ADIP family.

The protein localises to the preautophagosomal structure membrane. In terms of biological role, specifically required for selective degradation of peroxisomes via macropexophagy. In Pichia angusta (Yeast), this protein is Autophagy-related protein 25 (ATG25).